Here is an 811-residue protein sequence, read N- to C-terminus: Mitochondrial intermediate peptidase (811 aa).

Residues 1 to 25 (MRSGSRLSNYLVRLSGRVSFTQKRS) constitute a mitochondrion transit peptide. The interval 423 to 450 (TENGEKASTDTSTSTTTSTTTTDSTTTT) is disordered. Over residues 431–450 (TDTSTSTTTSTTTTDSTTTT) the composition is skewed to low complexity. Histidine 593 lines the Zn(2+) pocket. The active site involves glutamate 594. Residues histidine 597 and histidine 600 each coordinate Zn(2+).

The protein belongs to the peptidase M3 family. It depends on Zn(2+) as a cofactor.

Its subcellular location is the mitochondrion matrix. It catalyses the reaction Release of an N-terminal octapeptide as second stage of processing of some proteins imported into the mitochondrion.. In terms of biological role, cleaves proteins, imported into the mitochondrion, to their mature size. While most mitochondrial precursor proteins are processed to the mature form in one step by mitochondrial processing peptidase (MPP), the sequential cleavage by MIP of an octapeptide after initial processing by MPP is a required step for a subgroup of nuclear-encoded precursor proteins destined for the matrix or the inner membrane. The chain is Mitochondrial intermediate peptidase (OCT1) from Lodderomyces elongisporus (strain ATCC 11503 / CBS 2605 / JCM 1781 / NBRC 1676 / NRRL YB-4239) (Yeast).